Consider the following 121-residue polypeptide: Large ribosomal subunit protein bL12 (121 aa).

This sequence belongs to the bacterial ribosomal protein bL12 family. In terms of assembly, homodimer. Part of the ribosomal stalk of the 50S ribosomal subunit. Forms a multimeric L10(L12)X complex, where L10 forms an elongated spine to which 2 to 4 L12 dimers bind in a sequential fashion. Binds GTP-bound translation factors.

Its function is as follows. Forms part of the ribosomal stalk which helps the ribosome interact with GTP-bound translation factors. Is thus essential for accurate translation. This is Large ribosomal subunit protein bL12 from Oenococcus oeni (strain ATCC BAA-331 / PSU-1).